Here is a 295-residue protein sequence, read N- to C-terminus: Sulfotransferase 1A1 (295 aa).

48-53 (KSGTTW) provides a ligand contact to 3'-phosphoadenylyl sulfate. A substrate-binding site is contributed by 106–108 (KTH). His-108 (proton acceptor) is an active-site residue. Residues Arg-130, Ser-138, Tyr-193, 227 to 232 (TSFKEM), and 255 to 259 (FMRKG) each bind 3'-phosphoadenylyl sulfate. The residue at position 138 (Ser-138) is a Phosphoserine.

The protein belongs to the sulfotransferase 1 family. As to quaternary structure, homodimer. Liver, lung, adrenal, brain, platelets and skin.

It localises to the cytoplasm. The catalysed reaction is a phenol + 3'-phosphoadenylyl sulfate = an aryl sulfate + adenosine 3',5'-bisphosphate + H(+). The enzyme catalyses 17beta-estradiol + 3'-phosphoadenylyl sulfate = 17beta-estradiol 3-sulfate + adenosine 3',5'-bisphosphate + H(+). It carries out the reaction 4-ethylphenol + 3'-phosphoadenylyl sulfate = 4-ethylphenyl sulfate + adenosine 3',5'-bisphosphate + H(+). It catalyses the reaction 4-nitrophenol + 3'-phosphoadenylyl sulfate = 4-nitrophenyl sulfate + adenosine 3',5'-bisphosphate. The catalysed reaction is dopamine + 3'-phosphoadenylyl sulfate = dopamine 3-O-sulfate + adenosine 3',5'-bisphosphate + H(+). The enzyme catalyses dopamine + 3'-phosphoadenylyl sulfate = dopamine 4-O-sulfate + adenosine 3',5'-bisphosphate + H(+). It carries out the reaction 3,3',5-triiodo-L-thyronine + 3'-phosphoadenylyl sulfate = 3,3',5-triiodo-L-thyronine sulfate + adenosine 3',5'-bisphosphate + H(+). It catalyses the reaction 3,3',5'-triiodo-L-thyronine + 3'-phosphoadenylyl sulfate = 3,3',5'-triiodo-L-thyronine sulfate + adenosine 3',5'-bisphosphate + H(+). The catalysed reaction is 3,3'-diiodo-L-thyronine + 3'-phosphoadenylyl sulfate = 3,3'-diiodo-L-thyronine sulfate + adenosine 3',5'-bisphosphate + H(+). The enzyme catalyses L-thyroxine + 3'-phosphoadenylyl sulfate = L-thyroxine sulfate + adenosine 3',5'-bisphosphate + H(+). Functionally, sulfotransferase that utilizes 3'-phospho-5'-adenylyl sulfate (PAPS) as sulfonate donor to catalyze the sulfate conjugation of a wide variety of acceptor molecules bearing a hydroxyl or an amine group. Sulfonation increases the water solubility of most compounds, and therefore their renal excretion, but it can also result in bioactivation to form active metabolites. Displays broad substrate specificity for small phenolic compounds. Plays an important role in the sulfonation of endogenous molecules such as steroid hormones. Mediates the sulfate conjugation of a variety of xenobiotics, including the drugs acetaminophen and minoxidil. Mediates also the metabolic activation of carcinogenic N-hydroxyarylamines leading to highly reactive intermediates capable of forming DNA adducts, potentially resulting in mutagenesis. May play a role in gut microbiota-host metabolic interaction. O-sulfonates 4-ethylphenol (4-EP), a dietary tyrosine-derived metabolite produced by gut bacteria. The product 4-EPS crosses the blood-brain barrier and may negatively regulate oligodendrocyte maturation and myelination, affecting the functional connectivity of different brain regions associated with the limbic system. Catalyzes the sulfate conjugation of dopamine. Catalyzes the sulfation of T4 (L-thyroxine/3,5,3',5'-tetraiodothyronine), T3 (3,5,3'-triiodothyronine), rT3 (3,3',5'-triiodothyronine) and 3,3'-T2 (3,3'-diiodothyronine), with a substrate preference of 3,3'-T2 &gt; rT3 &gt; T3 &gt; T4. The chain is Sulfotransferase 1A1 (SULT1A1) from Homo sapiens (Human).